A 422-amino-acid polypeptide reads, in one-letter code: Phthiocerol/phthiodiolone dimycocerosyl transferase (422 aa).

Histidine 124 (proton acceptor) is an active-site residue.

This sequence belongs to the acyltransferase PapA5 family. In terms of assembly, monomer. Interacts directly with the acyl carrier protein (ACP) domain of the mycocerosic acid synthase (mas) protein.

It catalyses the reaction 2 a mycocerosyl-[mycocerosic acid synthase] + a phthiocerol = a dimycocerosyl phthiocerol + 2 holo-[mycocerosic acid synthase].. It carries out the reaction 2 a mycocerosyl-[mycocerosic acid synthase] + a phthiodiolone = a dimycocerosyl phthiodiolone + 2 holo-[mycocerosic acid synthase].. The enzyme catalyses 2 a mycocerosyl-[mycocerosic acid synthase] + a phenolphthiocerol = a dimycocerosyl phenolphthiocerol + 2 holo-[mycocerosic acid synthase].. In terms of biological role, catalyzes diesterification of phthiocerol, phthiodiolone, and phenolphthiocerol with mycocerosic acids, the final step in the phthiocerol, phthiodiolone and phenolphthiocerol dimycocerosate esters (PDIM) synthesis. Can directly transfer the mycocerosate bound to the mycocerosic acid synthase (mas) onto the substrate alcohols. This chain is Phthiocerol/phthiodiolone dimycocerosyl transferase (papA5), found in Mycobacterium tuberculosis (strain ATCC 25177 / H37Ra).